A 928-amino-acid chain; its full sequence is Probable outer membrane protein pmp10 (928 aa).

Residues 1–25 (MKSQFSWLVLSSTLACFTSCSTVFA) form the signal peptide. The region spanning 635-928 (TLCSDRGFWA…NVDLGGKFQF (294 aa)) is the Autotransporter domain.

Belongs to the PMP outer membrane protein family.

The protein localises to the secreted. Its subcellular location is the cell wall. The protein resides in the cell outer membrane. The chain is Probable outer membrane protein pmp10 (pmp10) from Chlamydia pneumoniae (Chlamydophila pneumoniae).